The chain runs to 209 residues: V-type ATP synthase subunit D 2 (209 aa).

The protein belongs to the V-ATPase D subunit family.

In terms of biological role, produces ATP from ADP in the presence of a proton gradient across the membrane. The chain is V-type ATP synthase subunit D 2 (atpD2) from Treponema pallidum (strain Nichols).